The sequence spans 386 residues: Na(+)/H(+) antiporter NhaA (386 aa).

The next 11 membrane-spanning stretches (helical) occupy residues 11-31 (NDAT…FLAN), 60-80 (LLLW…GLEV), 96-116 (MFPL…YAAF), 126-146 (GWAI…ALLG), 155-175 (MFLM…IALF), 180-200 (LSLI…VLNG), 218-238 (VAVL…GLFI), 260-280 (VSWL…LSGV), 293-313 (ITLG…WLAV), 326-346 (LIDI…SIFI), and 358-378 (LVTL…LVGY).

It belongs to the NhaA Na(+)/H(+) (TC 2.A.33) antiporter family.

Its subcellular location is the cell inner membrane. The catalysed reaction is Na(+)(in) + 2 H(+)(out) = Na(+)(out) + 2 H(+)(in). In terms of biological role, na(+)/H(+) antiporter that extrudes sodium in exchange for external protons. The chain is Na(+)/H(+) antiporter NhaA from Erwinia tasmaniensis (strain DSM 17950 / CFBP 7177 / CIP 109463 / NCPPB 4357 / Et1/99).